Consider the following 234-residue polypeptide: DNA repair protein RecO (234 aa).

Belongs to the RecO family.

Its function is as follows. Involved in DNA repair and RecF pathway recombination. In Idiomarina loihiensis (strain ATCC BAA-735 / DSM 15497 / L2-TR), this protein is DNA repair protein RecO.